The primary structure comprises 496 residues: Maturase K (496 aa).

This sequence belongs to the intron maturase 2 family. MatK subfamily.

Its subcellular location is the plastid. It localises to the chloroplast. Usually encoded in the trnK tRNA gene intron. Probably assists in splicing its own and other chloroplast group II introns. The polypeptide is Maturase K (Paeonia cambessedesii (Majorcan peony)).